Consider the following 269-residue polypeptide: Hemin import ATP-binding protein HmuV (269 aa).

The ABC transporter domain maps to 2–242 (LEVIHTGLNI…AMVEACFDLP (241 aa)). Residue 34–41 (GPNGAGKS) participates in ATP binding.

This sequence belongs to the ABC transporter superfamily. Heme (hemin) importer (TC 3.A.1.14.5) family. As to quaternary structure, the complex is composed of two ATP-binding proteins (HmuV), two transmembrane proteins (HmuU) and a solute-binding protein (HmuT).

It is found in the cell inner membrane. Its function is as follows. Part of the ABC transporter complex HmuTUV involved in hemin import. Responsible for energy coupling to the transport system. This is Hemin import ATP-binding protein HmuV from Methylobacillus flagellatus (strain ATCC 51484 / DSM 6875 / VKM B-1610 / KT).